A 127-amino-acid chain; its full sequence is Large ribosomal subunit protein bL17 (127 aa).

The protein belongs to the bacterial ribosomal protein bL17 family. Part of the 50S ribosomal subunit. Contacts protein L32.

This chain is Large ribosomal subunit protein bL17, found in Legionella pneumophila (strain Corby).